Here is a 629-residue protein sequence, read N- to C-terminus: Protein fem-1 homolog B (629 aa).

ANK repeat units lie at residues 47 to 77 (QRST…DVQQ), 89 to 118 (DGAT…NVNH), 122 to 151 (TNST…NISI), 155 to 184 (YDNT…DPNA), 188 to 217 (CGAT…AMVV), and 220 to 250 (HGMT…DAKS). The stretch at 346 to 379 (SHPIIYRGAVYADNMQFEQCIKLWLHALQLRQKG) is one TPR repeat. ANK repeat units follow at residues 485 to 529 (EGGS…NVNA) and 533 to 570 (MGNS…HTDM).

The protein belongs to the fem-1 family. Component of a CRL2 E3 ubiquitin-protein ligase complex, also named ECS (Elongin BC-CUL2/5-SOCS-box protein) complex.

Its subcellular location is the cytoplasm. It is found in the nucleus. Its pathway is protein modification; protein ubiquitination. In terms of biological role, substrate-recognition component of a Cul2-RING (CRL2) E3 ubiquitin-protein ligase complex of the DesCEND (destruction via C-end degrons) pathway, which recognizes a C-degron located at the extreme C terminus of target proteins, leading to their ubiquitination and degradation. The C-degron recognized by the DesCEND pathway is usually a motif of less than ten residues and can be present in full-length proteins, truncated proteins or proteolytically cleaved forms. The CRL2(FEM1B) complex specifically recognizes proteins ending with -Gly-Leu-Asp-Arg, leading to their ubiquitination and degradation. The protein is Protein fem-1 homolog B of Xenopus laevis (African clawed frog).